The following is a 364-amino-acid chain: Popeye domain-containing protein 2 (364 aa).

Residue Asn4 is glycosylated (N-linked (GlcNAc...) asparagine). Helical transmembrane passes span 37 to 57 (LLLG…FGFL) and 77 to 97 (IVLW…HLVY). The segment at 276-333 (ADAGPESEKGDEEVCEPAVSPPQATPTSLQQTPPCSTPPATTNFPAPPTRARLSRPDS) is disordered. The span at 300–309 (TPTSLQQTPP) shows a compositional bias: polar residues. At Thr361 the chain carries Phosphothreonine.

This sequence belongs to the popeye family. In terms of tissue distribution, expressed predominantly in the heart and in the skeletal muscle.

Its subcellular location is the membrane. The protein localises to the cell membrane. It is found in the sarcolemma. Its function is as follows. Important for the maintenance of cardiac function. Plays a regulatory function in heart rate dynamics mediated, at least in part, through cAMP-binding and, probably, by increasing cell surface expression of the potassium channel KCNK2 and enhancing current density. The protein is Popeye domain-containing protein 2 (POPDC2) of Homo sapiens (Human).